We begin with the raw amino-acid sequence, 212 residues long: Thiamine-phosphate synthase (212 aa).

38 to 42 (QLREK) contributes to the 4-amino-2-methyl-5-(diphosphooxymethyl)pyrimidine binding site. Residues Asp-71 and Asp-90 each coordinate Mg(2+). Lys-138 is a 4-amino-2-methyl-5-(diphosphooxymethyl)pyrimidine binding site. Gly-166 serves as a coordination point for 2-[(2R,5Z)-2-carboxy-4-methylthiazol-5(2H)-ylidene]ethyl phosphate.

It belongs to the thiamine-phosphate synthase family. Requires Mg(2+) as cofactor.

It carries out the reaction 2-[(2R,5Z)-2-carboxy-4-methylthiazol-5(2H)-ylidene]ethyl phosphate + 4-amino-2-methyl-5-(diphosphooxymethyl)pyrimidine + 2 H(+) = thiamine phosphate + CO2 + diphosphate. The enzyme catalyses 2-(2-carboxy-4-methylthiazol-5-yl)ethyl phosphate + 4-amino-2-methyl-5-(diphosphooxymethyl)pyrimidine + 2 H(+) = thiamine phosphate + CO2 + diphosphate. It catalyses the reaction 4-methyl-5-(2-phosphooxyethyl)-thiazole + 4-amino-2-methyl-5-(diphosphooxymethyl)pyrimidine + H(+) = thiamine phosphate + diphosphate. It participates in cofactor biosynthesis; thiamine diphosphate biosynthesis; thiamine phosphate from 4-amino-2-methyl-5-diphosphomethylpyrimidine and 4-methyl-5-(2-phosphoethyl)-thiazole: step 1/1. In terms of biological role, condenses 4-methyl-5-(beta-hydroxyethyl)thiazole monophosphate (THZ-P) and 2-methyl-4-amino-5-hydroxymethyl pyrimidine pyrophosphate (HMP-PP) to form thiamine monophosphate (TMP). This Chlamydia abortus (strain DSM 27085 / S26/3) (Chlamydophila abortus) protein is Thiamine-phosphate synthase.